The chain runs to 490 residues: MRYALIASMLGQAAISVAMPSEPAHSPRAAGAQAYASNQAGNYKLTSIAAPVQGNGSPGPSTWNLSIDDTSSGYKQKIVGFGAAVTDATVSAFNELSASTLSQLLDELMTGAGASFSLMRHTIGASDLSGDPAYTYDDNGGNADPGMTGFNLGDRGTAMATMLAQMKGLNSNLQIFGSPWSAPGWMKLNNAIDGNTNNNNLNDGYLTNNGAQYSAAFAQYFVKYIQAFESHGATINAITLQNEPLNSQAGYPTMYMFSYEQGDLIQNYVAPALKAAGLSTKIWAYDHNTDQPDFPEQVMGIAADDVSAVAWHCYATNLDWTVLTNFHNSYPNTDQYMTECWTPSTGAWNQAASFTMGPLQNWARGVAAWTLGTTAQDGPHLSSGGCGTCTGLVTINNGQYTFQTAYYMMAQFSKFMPVGATVLSGTGSYTYSGSGGVQSVASLNPDGTRTVVIENTFGNDIYIHLSTSSGQEWSGNVPTNSVTTWVLPAV.

The N-terminal stretch at Met1 to Arg28 is a signal peptide. The active-site Proton donor is the Glu243. Catalysis depends on Glu339, which acts as the Nucleophile.

This sequence belongs to the glycosyl hydrolase 30 family.

The protein localises to the secreted. Its subcellular location is the extracellular space. The enzyme catalyses Random hydrolysis of (1-&gt;6)-linkages in (1-&gt;6)-beta-D-glucans.. Functionally, has highest activity on the linear beta-1,6-glucan pustulan. Lower activity against yeast glucan and laminarin (beta-1,3-glucans with beta-1,6-branches). No activity on colloidal chitin, pachyman, starch, cellulose, nigeran, dextran or gentobiose. The sequence is that of Endo-1,6-beta-D-glucanase BGN16.3 from Trichoderma harzianum (Hypocrea lixii).